The following is a 369-amino-acid chain: Protein FAM187B (369 aa).

An N-terminal signal peptide occupies residues 1–17; that stretch reads MPPMLWLLLHFAAPALG. Residues 18–335 are Extracellular-facing; it reads FYFSISCPSG…RADSVLKGLK (318 aa). N-linked (GlcNAc...) asparagine glycans are attached at residues Asn-45, Asn-68, and Asn-130. Residues 336–356 form a helical membrane-spanning segment; sequence LVLLVVTVLALLGALLKCIHP. The Cytoplasmic segment spans residues 357-369; the sequence is SPGRRSTQVLVVK.

This sequence belongs to the FAM187 family.

The protein localises to the membrane. The protein is Protein FAM187B (FAM187B) of Homo sapiens (Human).